A 185-amino-acid chain; its full sequence is DNA-directed RNA polymerase 22 kDa subunit (185 aa).

This sequence belongs to the poxviridae DNA-directed RNA polymerase 22 kDa subunit family. The DNA-dependent RNA polymerase used for intermediate and late genes expression consists of eight subunits Rpo30/OPG66, Rpo7/OPG90, Rpo22/OPG103, Rpo147/OPG105, Rpo18/OPG119, Rpo19/OPG131, Rpo132/OPG151 and Rpo35/OPG156. The same holoenzyme, with the addition of the transcription-specificity factor OPG109, is used for early gene expression.

The protein localises to the virion. It catalyses the reaction RNA(n) + a ribonucleoside 5'-triphosphate = RNA(n+1) + diphosphate. Part of the DNA-dependent RNA polymerase which catalyzes the transcription of viral DNA into RNA using the four ribonucleoside triphosphates as substrates. Responsible for the transcription of early, intermediate and late genes. DNA-dependent RNA polymerase associates with the early transcription factor (ETF), itself composed of OPG118 and OPG133, thereby allowing the early genes transcription. Late transcription, and probably also intermediate transcription, require newly synthesized RNA polymerase. The chain is DNA-directed RNA polymerase 22 kDa subunit (OPG103) from Cynomys gunnisoni (Gunnison's prairie dog).